An 87-amino-acid polypeptide reads, in one-letter code: DNA-directed RNA polymerase subunit omega (87 aa).

It belongs to the RNA polymerase subunit omega family. The RNAP catalytic core consists of 2 alpha, 1 beta, 1 beta' and 1 omega subunit. When a sigma factor is associated with the core the holoenzyme is formed, which can initiate transcription.

The enzyme catalyses RNA(n) + a ribonucleoside 5'-triphosphate = RNA(n+1) + diphosphate. Its function is as follows. Promotes RNA polymerase assembly. Latches the N- and C-terminal regions of the beta' subunit thereby facilitating its interaction with the beta and alpha subunits. This is DNA-directed RNA polymerase subunit omega from Pseudomonas syringae pv. syringae (strain B728a).